The following is a 171-amino-acid chain: 3-hydroxyanthranilate 3,4-dioxygenase (171 aa).

Residue arginine 45 participates in O2 binding. 3 residues coordinate Fe cation: histidine 49, glutamate 55, and histidine 93. Substrate is bound at residue glutamate 55. The substrate site is built by arginine 97 and glutamate 107. 4 residues coordinate a divalent metal cation: cysteine 122, cysteine 125, cysteine 159, and cysteine 162.

Belongs to the 3-HAO family. Fe(2+) is required as a cofactor.

Its subcellular location is the cytoplasm. The catalysed reaction is 3-hydroxyanthranilate + O2 = (2Z,4Z)-2-amino-3-carboxymuconate 6-semialdehyde. The protein operates within cofactor biosynthesis; NAD(+) biosynthesis; quinolinate from L-kynurenine: step 3/3. Its function is as follows. Catalyzes the oxidative ring opening of 3-hydroxyanthranilate to 2-amino-3-carboxymuconate semialdehyde, which spontaneously cyclizes to quinolinate. The protein is 3-hydroxyanthranilate 3,4-dioxygenase of Candida albicans (strain SC5314 / ATCC MYA-2876) (Yeast).